Consider the following 172-residue polypeptide: Translation initiation factor IF-3 (172 aa).

The protein belongs to the IF-3 family. In terms of assembly, monomer.

It localises to the cytoplasm. IF-3 binds to the 30S ribosomal subunit and shifts the equilibrium between 70S ribosomes and their 50S and 30S subunits in favor of the free subunits, thus enhancing the availability of 30S subunits on which protein synthesis initiation begins. The sequence is that of Translation initiation factor IF-3 from Haemophilus influenzae (strain ATCC 51907 / DSM 11121 / KW20 / Rd).